The chain runs to 338 residues: Decarboxylase macB (338 aa).

Zn(2+)-binding residues include His-7, His-9, His-159, and Asp-283.

Belongs to the metallo-dependent hydrolases superfamily. ACMSD family.

It carries out the reaction 6-methylsalicylate + H(+) = 3-methylphenol + CO2. The protein operates within secondary metabolite biosynthesis; terpenoid biosynthesis. Functionally, decarboxylase; part of the gene cluster that mediates the biosynthesis of macrophorins, isoprenoid epoxycyclohexenones containing cyclized drimane moieties. The first step of the pathway is the synthesis of 6-methylsalicylic acid (6-MSA) by the polyketide synthase macA. 6-MSA is then converted to m-cresol by the decarboxylase macB. The cytochrome P450 monooxygenase macC then catalyzes the oxidation of m-cresol to toluquinol. Epoxidation of toluquinol is then performed by the short chain dehydrogenase macD, with the help of macE, and a further prenylation by macG leads to 7-deacetoxyyanuthone A. The next step is the hydroxylation of C-22 of 7-deacetoxyyanuthone A by the cytochrome P450 monooxygenase macH to yield 22-deacetylyanuthone A. O-Mevalon transferase macI then attaches mevalon to the hydroxyl group of 22-deacetylyanuthone A to produce yanuthone E. The terpene cyclase macJ catalyzes the cyclization of 22-deacetylyanuthone A to macrophorin A. MacJ is also able to catalyze cyclization of yanuthone E and 7-deacetoxyyanuthone A to their corresponding macrophorins. The macJ products can be further modified by macH and macJ, as well as by the FAD-dependent monooxygenase macF, to produce additional macrophorins, including 4'-oxomacrophorin A, 4'-oxomacrophorin D and 4'-oxomacrophorin E. This Penicillium terrestre protein is Decarboxylase macB.